We begin with the raw amino-acid sequence, 121 residues long: Small ribosomal subunit protein uS13 (121 aa).

Positions 92–121 (HRMGLPCRGQKTKTNARTRKGPRRGAARRK) are disordered. Residues 101–121 (QKTKTNARTRKGPRRGAARRK) show a composition bias toward basic residues.

Belongs to the universal ribosomal protein uS13 family. As to quaternary structure, part of the 30S ribosomal subunit. Forms a loose heterodimer with protein S19. Forms two bridges to the 50S subunit in the 70S ribosome.

Functionally, located at the top of the head of the 30S subunit, it contacts several helices of the 16S rRNA. In the 70S ribosome it contacts the 23S rRNA (bridge B1a) and protein L5 of the 50S subunit (bridge B1b), connecting the 2 subunits; these bridges are implicated in subunit movement. Contacts the tRNAs in the A and P-sites. This chain is Small ribosomal subunit protein uS13, found in Desulfotalea psychrophila (strain LSv54 / DSM 12343).